The sequence spans 1481 residues: ABC-type transporter braE (1481 aa).

Transmembrane regions (helical) follow at residues Phe-27–Ala-47, Leu-86–Leu-106, Ile-130–Tyr-150, Glu-159–Leu-179, Leu-269–Cys-289, and Pro-308–Ile-328. In terms of domain architecture, ABC transmembrane type-1 1 spans Leu-281–Ala-549. N-linked (GlcNAc...) asparagine glycosylation occurs at Asn-367. A run of 3 helical transmembrane segments spans residues Glu-389 to Gly-409, Val-410 to Met-430, and Leu-491 to Phe-511. The ABC transporter 1 domain occupies Val-594 to Lys-823. Gly-627–Ser-634 lines the ATP pocket. Residues Asn-671 and Asn-813 are each glycosylated (N-linked (GlcNAc...) asparagine). The next 6 helical transmembrane spans lie at Ile-887–Leu-907, Ala-928–Leu-948, Ser-1001–Ala-1021, Tyr-1026–Leu-1046, Leu-1111–Val-1131, and Leu-1144–Leu-1164. Residues Ile-887 to Thr-1166 form the ABC transmembrane type-1 2 domain. Residues Asn-1207 and Asn-1232 are each glycosylated (N-linked (GlcNAc...) asparagine). The region spanning Leu-1224–Ser-1477 is the ABC transporter 2 domain. Gly-1260–Ser-1267 is an ATP binding site. 2 N-linked (GlcNAc...) asparagine glycosylation sites follow: Asn-1330 and Asn-1364.

This sequence belongs to the ABC transporter superfamily. ABCC family. Conjugate transporter (TC 3.A.1.208) subfamily.

The protein localises to the membrane. Its function is as follows. ABC-type transporter; part of the gene cluster that mediates the biosynthesis of the brasilane terpene glycosides brasilane D and E. The polypeptide is ABC-type transporter braE (Annulohypoxylon truncatum (Hypoxylon truncatum)).